A 334-amino-acid polypeptide reads, in one-letter code: Putative carboxypeptidase VC_A0337 (334 aa).

Serine 112 functions as the Nucleophile in the catalytic mechanism. Active-site charge relay system residues include glutamate 234 and histidine 302.

The protein belongs to the peptidase S66 family.

This chain is Putative carboxypeptidase VC_A0337, found in Vibrio cholerae serotype O1 (strain ATCC 39315 / El Tor Inaba N16961).